A 508-amino-acid chain; its full sequence is Maturase K (508 aa).

It belongs to the intron maturase 2 family. MatK subfamily.

The protein localises to the plastid. It localises to the chloroplast. Functionally, usually encoded in the trnK tRNA gene intron. Probably assists in splicing its own and other chloroplast group II introns. The protein is Maturase K of Chaetosphaeridium globosum (Charophycean green alga).